The sequence spans 281 residues: Diaminopimelate epimerase (281 aa).

Positions 11 and 65 each coordinate substrate. Residue C74 is the Proton donor of the active site. Substrate contacts are provided by residues 75–76 (GN), N164, N197, and 215–216 (ER). The active-site Proton acceptor is the C224. 225–226 (GT) is a substrate binding site.

It belongs to the diaminopimelate epimerase family. Homodimer.

The protein resides in the cytoplasm. It catalyses the reaction (2S,6S)-2,6-diaminopimelate = meso-2,6-diaminopimelate. It participates in amino-acid biosynthesis; L-lysine biosynthesis via DAP pathway; DL-2,6-diaminopimelate from LL-2,6-diaminopimelate: step 1/1. Catalyzes the stereoinversion of LL-2,6-diaminopimelate (L,L-DAP) to meso-diaminopimelate (meso-DAP), a precursor of L-lysine and an essential component of the bacterial peptidoglycan. This is Diaminopimelate epimerase from Heliobacterium modesticaldum (strain ATCC 51547 / Ice1).